We begin with the raw amino-acid sequence, 372 residues long: UDP-N-acetylglucosamine--N-acetylmuramyl-(pentapeptide) pyrophosphoryl-undecaprenol N-acetylglucosamine transferase (372 aa).

Residues 11 to 13 (TAG), asparagine 123, arginine 160, serine 200, and glutamine 298 contribute to the UDP-N-acetyl-alpha-D-glucosamine site.

Belongs to the glycosyltransferase 28 family. MurG subfamily.

The protein localises to the cell membrane. It carries out the reaction di-trans,octa-cis-undecaprenyl diphospho-N-acetyl-alpha-D-muramoyl-L-alanyl-D-glutamyl-meso-2,6-diaminopimeloyl-D-alanyl-D-alanine + UDP-N-acetyl-alpha-D-glucosamine = di-trans,octa-cis-undecaprenyl diphospho-[N-acetyl-alpha-D-glucosaminyl-(1-&gt;4)]-N-acetyl-alpha-D-muramoyl-L-alanyl-D-glutamyl-meso-2,6-diaminopimeloyl-D-alanyl-D-alanine + UDP + H(+). It participates in cell wall biogenesis; peptidoglycan biosynthesis. Cell wall formation. Catalyzes the transfer of a GlcNAc subunit on undecaprenyl-pyrophosphoryl-MurNAc-pentapeptide (lipid intermediate I) to form undecaprenyl-pyrophosphoryl-MurNAc-(pentapeptide)GlcNAc (lipid intermediate II). The polypeptide is UDP-N-acetylglucosamine--N-acetylmuramyl-(pentapeptide) pyrophosphoryl-undecaprenol N-acetylglucosamine transferase (Cutibacterium acnes (strain DSM 16379 / KPA171202) (Propionibacterium acnes)).